Reading from the N-terminus, the 268-residue chain is Gasdermin bGSDM (268 aa).

Residue C3 is the site of S-palmitoyl cysteine attachment. 4 beta stranded membrane-spanning segments follow: residues 78–94 (IDLR…AAKI), 103–121 (APSF…FHIE), 168–185 (KMRM…GVDV), and 195–211 (AKLE…RLVF). Positions 248–268 (GENMALNLFTEIQDAGFIEVT) are C-terminal region.

This sequence belongs to the bacterial gasdermin family. Monomer in solution. In terms of assembly, forms large, homooligomeric ring-shaped pores when inserted in membranes. Post-translationally, cleavage by the adjacently encoded protease (G563DRAFT_02009) between Leu-247 and Gly-248 relieves autoinhibition, releasing the N-terminus which initiates loss of cell integrity. Palmitoylation helps stabilize the inactive state; may self-palmitoylate. Palmitoylation is not required for permeabilization of liposomes by the ring-like pores in vitro. Palmitoylation plays a significant role in pore formation.

It is found in the cytoplasm. The protein resides in the cell inner membrane. The full-length protein before cleavage is inactive: intramolecular interactions between the N-terminal domain and the C-terminal region, as well as the lipid modification, mediate autoinhibition. The pyroptosis-like-inducing activity is carried by the released N-terminal domain (gasdermin bGSDM, N-terminus). Its function is as follows. Precursor of a pore-forming protein involved in defense against bacteriophages. Cleavage of this precursor by its dedicated, neighboring protease (G563DRAFT_02009) releases the active moiety (gasdermin bGSDM, N-terminus) which inserts into membranes, forming pores and triggering cell death. Expression of bGSDM and its protease is highly toxic in E.coli. Cells expressing the gene pair stop dividing and lose membrane integrity. Both proteins are required to kill E.coli. Functionally, pore-forming protein that causes membrane permeabilization via a pyroptosis-like activity. Makes ring-like pores with walls about 50 Angstroms thick and an interior pore diameter of 200-300 Angstroms, when integrated in liposomes. In Runella zeae (strain ATCC BAA-293 / DSM 19591 / LMG 21438 / NS12), this protein is Gasdermin bGSDM.